Reading from the N-terminus, the 325-residue chain is Glycerol-3-phosphate dehydrogenase [NAD(P)+] (325 aa).

The NADPH site is built by Trp11, Arg30, and Lys103. Positions 103, 131, and 133 each coordinate sn-glycerol 3-phosphate. Residue Ala135 participates in NADPH binding. Lys186, Asp242, Ser252, Arg253, and Asn254 together coordinate sn-glycerol 3-phosphate. The Proton acceptor role is filled by Lys186. Residue Arg253 participates in NADPH binding. NADPH is bound by residues Val279 and Glu281.

The protein belongs to the NAD-dependent glycerol-3-phosphate dehydrogenase family.

It localises to the cytoplasm. It catalyses the reaction sn-glycerol 3-phosphate + NAD(+) = dihydroxyacetone phosphate + NADH + H(+). The enzyme catalyses sn-glycerol 3-phosphate + NADP(+) = dihydroxyacetone phosphate + NADPH + H(+). It participates in membrane lipid metabolism; glycerophospholipid metabolism. Its function is as follows. Catalyzes the reduction of the glycolytic intermediate dihydroxyacetone phosphate (DHAP) to sn-glycerol 3-phosphate (G3P), the key precursor for phospholipid synthesis. This is Glycerol-3-phosphate dehydrogenase [NAD(P)+] from Wolbachia pipientis subsp. Culex pipiens (strain wPip).